The chain runs to 98 residues: NADH-ubiquinone oxidoreductase chain 4L (98 aa).

The next 3 membrane-spanning stretches (helical) occupy residues 1–21 (MSMVYMNIMMAFTVSLVGLLM), 29–49 (SLLCLEGMMLSLFVMAALTIL), and 61–81 (IILLVFAACEAALGLSLLVMV).

It belongs to the complex I subunit 4L family. Core subunit of respiratory chain NADH dehydrogenase (Complex I) which is composed of 45 different subunits.

It localises to the mitochondrion inner membrane. The catalysed reaction is a ubiquinone + NADH + 5 H(+)(in) = a ubiquinol + NAD(+) + 4 H(+)(out). In terms of biological role, core subunit of the mitochondrial membrane respiratory chain NADH dehydrogenase (Complex I) which catalyzes electron transfer from NADH through the respiratory chain, using ubiquinone as an electron acceptor. Part of the enzyme membrane arm which is embedded in the lipid bilayer and involved in proton translocation. This Bos indicus (Zebu) protein is NADH-ubiquinone oxidoreductase chain 4L (MT-ND4L).